Here is a 130-residue protein sequence, read N- to C-terminus: Protein 7.7 (130 aa).

In Escherichia phage T7 (Bacteriophage T7), this protein is Protein 7.7.